The sequence spans 261 residues: Cytochrome c oxidase subunit 3 (261 aa).

Residues 1-15 lie on the Mitochondrial matrix side of the membrane; that stretch reads MSHQAHAYHMVDPSP. The chain crosses the membrane as a helical span at residues 16 to 34; sequence WPLTGAGAALLMTSGLAMW. At 35–40 the chain is on the mitochondrial intermembrane side; the sequence is FHKNSC. Residues 41–66 form a helical membrane-spanning segment; it reads ILMTLGLILMLLTMYQWWRDIVREGT. The Mitochondrial matrix portion of the chain corresponds to 67-72; sequence FLGHHT. The helical transmembrane segment at 73 to 105 threads the bilayer; sequence SPVQQGLRYGMILFIISEVCFFAGFFWAFYHAS. Residues 106–128 are Mitochondrial intermembrane-facing; sequence LAPTPELGLTWPPTGINPLNPFE. Residues 129 to 152 traverse the membrane as a helical segment; sequence VPLLNTAVLLASGVSVTWAHHSIT. Topologically, residues 153 to 155 are mitochondrial matrix; it reads EKN. The helical transmembrane segment at 156–183 threads the bilayer; the sequence is RTETTQALTLTVLLGLYFTALQIMEYYE. At 184-190 the chain is on the mitochondrial intermembrane side; the sequence is TPFTMAD. Residues 191–223 traverse the membrane as a helical segment; the sequence is GVYGSTFFVATGFHGLHVIIGSLFLLTCLLRHL. The Mitochondrial matrix segment spans residues 224-232; the sequence is QYHFTSKHH. A helical transmembrane segment spans residues 233–256; that stretch reads FGFEAAAWYWHFVDVVWLFLYISI. At 257 to 261 the chain is on the mitochondrial intermembrane side; the sequence is YWWGS.

This sequence belongs to the cytochrome c oxidase subunit 3 family. In terms of assembly, component of the cytochrome c oxidase (complex IV, CIV), a multisubunit enzyme composed of 14 subunits. The complex is composed of a catalytic core of 3 subunits MT-CO1, MT-CO2 and MT-CO3, encoded in the mitochondrial DNA, and 11 supernumerary subunits COX4I, COX5A, COX5B, COX6A, COX6B, COX6C, COX7A, COX7B, COX7C, COX8 and NDUFA4, which are encoded in the nuclear genome. The complex exists as a monomer or a dimer and forms supercomplexes (SCs) in the inner mitochondrial membrane with NADH-ubiquinone oxidoreductase (complex I, CI) and ubiquinol-cytochrome c oxidoreductase (cytochrome b-c1 complex, complex III, CIII), resulting in different assemblies (supercomplex SCI(1)III(2)IV(1) and megacomplex MCI(2)III(2)IV(2)).

The protein resides in the mitochondrion inner membrane. It carries out the reaction 4 Fe(II)-[cytochrome c] + O2 + 8 H(+)(in) = 4 Fe(III)-[cytochrome c] + 2 H2O + 4 H(+)(out). Component of the cytochrome c oxidase, the last enzyme in the mitochondrial electron transport chain which drives oxidative phosphorylation. The respiratory chain contains 3 multisubunit complexes succinate dehydrogenase (complex II, CII), ubiquinol-cytochrome c oxidoreductase (cytochrome b-c1 complex, complex III, CIII) and cytochrome c oxidase (complex IV, CIV), that cooperate to transfer electrons derived from NADH and succinate to molecular oxygen, creating an electrochemical gradient over the inner membrane that drives transmembrane transport and the ATP synthase. Cytochrome c oxidase is the component of the respiratory chain that catalyzes the reduction of oxygen to water. Electrons originating from reduced cytochrome c in the intermembrane space (IMS) are transferred via the dinuclear copper A center (CU(A)) of subunit 2 and heme A of subunit 1 to the active site in subunit 1, a binuclear center (BNC) formed by heme A3 and copper B (CU(B)). The BNC reduces molecular oxygen to 2 water molecules using 4 electrons from cytochrome c in the IMS and 4 protons from the mitochondrial matrix. This Petromyzon marinus (Sea lamprey) protein is Cytochrome c oxidase subunit 3 (MT-CO3).